Consider the following 629-residue polypeptide: tRNA uridine 5-carboxymethylaminomethyl modification enzyme MnmG (629 aa).

FAD contacts are provided by residues 13–18 (GGGHAG), Val125, and Ser180. Position 273–287 (273–287 (GPRYCPSIEDKVMRF)) interacts with NAD(+). Residue Gln370 participates in FAD binding.

The protein belongs to the MnmG family. In terms of assembly, homodimer. Heterotetramer of two MnmE and two MnmG subunits. The cofactor is FAD.

Its subcellular location is the cytoplasm. In terms of biological role, NAD-binding protein involved in the addition of a carboxymethylaminomethyl (cmnm) group at the wobble position (U34) of certain tRNAs, forming tRNA-cmnm(5)s(2)U34. The chain is tRNA uridine 5-carboxymethylaminomethyl modification enzyme MnmG from Escherichia coli O157:H7.